Reading from the N-terminus, the 166-residue chain is MYIDTAELCDIYLDQIDVVEPIFSSFGGKSTFFGKITTIKCFENNGLISEILEENGEGRVLLIDGGGAVRRALIDANLAQLAADNGWEGIIVYGAIRQLQQLENINIGIQALAPIPVGSDEQSIGETDVPVNFGGVTFFPDDYVYADLTGIILSQEPLDLEEFDSL.

This sequence belongs to the RraA family. Homotrimer. Binds to both RNA-binding sites in the C-terminal region of Rne and to RhlB.

Its subcellular location is the cytoplasm. In terms of biological role, globally modulates RNA abundance by binding to RNase E (Rne) and regulating its endonucleolytic activity. Can modulate Rne action in a substrate-dependent manner by altering the composition of the degradosome. Modulates RNA-binding and helicase activities of the degradosome. The polypeptide is Regulator of ribonuclease activity A (Histophilus somni (strain 129Pt) (Haemophilus somnus)).